The sequence spans 192 residues: Large ribosomal subunit protein bL9 (192 aa).

Residues 173–192 (ALRPEDFFDPEADGVDEDEA) are disordered. Residues 179–192 (FFDPEADGVDEDEA) show a composition bias toward acidic residues.

It belongs to the bacterial ribosomal protein bL9 family.

Its function is as follows. Binds to the 23S rRNA. In Rhizobium leguminosarum bv. trifolii, this protein is Large ribosomal subunit protein bL9 (rplI).